The following is a 467-amino-acid chain: tRNA-2-methylthio-N(6)-dimethylallyladenosine synthase (467 aa).

The 121-residue stretch at 15-135 (KKIFVKTYGC…LPEYVARLAN (121 aa)) folds into the MTTase N-terminal domain. [4Fe-4S] cluster contacts are provided by C24, C60, C98, C177, C181, and C184. The region spanning 163–395 (LARGATAFLT…QALLGEQQLA (233 aa)) is the Radical SAM core domain. The TRAM domain maps to 398–461 (AGCAGRTMPV…RNSLRGRLRE (64 aa)).

This sequence belongs to the methylthiotransferase family. MiaB subfamily. In terms of assembly, monomer. It depends on [4Fe-4S] cluster as a cofactor.

It localises to the cytoplasm. The catalysed reaction is N(6)-dimethylallyladenosine(37) in tRNA + (sulfur carrier)-SH + AH2 + 2 S-adenosyl-L-methionine = 2-methylsulfanyl-N(6)-dimethylallyladenosine(37) in tRNA + (sulfur carrier)-H + 5'-deoxyadenosine + L-methionine + A + S-adenosyl-L-homocysteine + 2 H(+). Its function is as follows. Catalyzes the methylthiolation of N6-(dimethylallyl)adenosine (i(6)A), leading to the formation of 2-methylthio-N6-(dimethylallyl)adenosine (ms(2)i(6)A) at position 37 in tRNAs that read codons beginning with uridine. This Parvibaculum lavamentivorans (strain DS-1 / DSM 13023 / NCIMB 13966) protein is tRNA-2-methylthio-N(6)-dimethylallyladenosine synthase.